A 197-amino-acid chain; its full sequence is uncharacterized protein (197 aa).

4 helical membrane passes run 11–31 (IALIVVGIIALFLPWLTISAS), 85–105 (STFMMIFGIIPIILYIASIFV), 109–129 (AVVVGAGIAGITCASIFVVLF), and 174–194 (VGTGWYLTMIIGLALIAYPFI).

The protein resides in the cell membrane. This is an uncharacterized protein from Methanocaldococcus jannaschii (strain ATCC 43067 / DSM 2661 / JAL-1 / JCM 10045 / NBRC 100440) (Methanococcus jannaschii).